The following is a 196-amino-acid chain: Heat shock protein beta-8 (196 aa).

Residues Ser-24 and Ser-57 each carry the phosphoserine modification. The residue at position 63 (Thr-63) is a Phosphothreonine; by PKC; in vitro. Asymmetric dimethylarginine occurs at positions 71 and 78. Positions 74-185 (TATARFGVPA…TFGESSFNNE (112 aa)) constitute a sHSP domain. Residues 176–196 (TFGESSFNNELPQDSQEVTCT) are disordered. Over residues 177–196 (FGESSFNNELPQDSQEVTCT) the composition is skewed to polar residues.

This sequence belongs to the small heat shock protein (HSP20) family. Monomer. Forms a ternary complex with BAG3 and HSPA1A. Component of the chaperone-assisted selective autophagy (CASA) complex consisting of BAG3, HSPA8/HSC70, HSPB8 and STUB1/CHIP. Interacts with HSPB1. Interacts with DNAJB6. Interacts with BAG3. In terms of tissue distribution, predominantly expressed in skeletal muscle and heart.

It localises to the cytoplasm. The protein localises to the nucleus. Its function is as follows. Involved in the chaperone-assisted selective autophagy (CASA), a crucial process for protein quality control, particularly in mechanical strained cells and tissues such as muscle. Displays temperature-dependent chaperone activity. In Homo sapiens (Human), this protein is Heat shock protein beta-8 (HSPB8).